The following is a 382-amino-acid chain: Chaperone protein DnaJ (382 aa).

The 66-residue stretch at Asp-5–Gly-70 folds into the J domain. Residues Gly-134–Lys-212 form a CR-type zinc finger. Cys-147, Cys-150, Cys-164, Cys-167, Cys-186, Cys-189, Cys-200, and Cys-203 together coordinate Zn(2+). CXXCXGXG motif repeat units follow at residues Cys-147–Gly-154, Cys-164–Gly-171, Cys-186–Gly-193, and Cys-200–Gly-207.

The protein belongs to the DnaJ family. As to quaternary structure, homodimer. Zn(2+) serves as cofactor.

It localises to the cytoplasm. In terms of biological role, participates actively in the response to hyperosmotic and heat shock by preventing the aggregation of stress-denatured proteins and by disaggregating proteins, also in an autonomous, DnaK-independent fashion. Unfolded proteins bind initially to DnaJ; upon interaction with the DnaJ-bound protein, DnaK hydrolyzes its bound ATP, resulting in the formation of a stable complex. GrpE releases ADP from DnaK; ATP binding to DnaK triggers the release of the substrate protein, thus completing the reaction cycle. Several rounds of ATP-dependent interactions between DnaJ, DnaK and GrpE are required for fully efficient folding. Also involved, together with DnaK and GrpE, in the DNA replication of plasmids through activation of initiation proteins. This is Chaperone protein DnaJ from Haemophilus influenzae (strain PittGG).